A 249-amino-acid polypeptide reads, in one-letter code: Phosphate import ATP-binding protein PstB (249 aa).

An ABC transporter domain is found at 3 to 244 (IEANDVHVYY…PKKKRTQNYI (242 aa)). An ATP-binding site is contributed by 35-42 (GPSGCGKS).

It belongs to the ABC transporter superfamily. Phosphate importer (TC 3.A.1.7) family. The complex is composed of two ATP-binding proteins (PstB), two transmembrane proteins (PstC and PstA) and a solute-binding protein (PstS).

Its subcellular location is the cell inner membrane. The catalysed reaction is phosphate(out) + ATP + H2O = ADP + 2 phosphate(in) + H(+). Its function is as follows. Part of the ABC transporter complex PstSACB involved in phosphate import. Responsible for energy coupling to the transport system. The sequence is that of Phosphate import ATP-binding protein PstB from Cytophaga hutchinsonii (strain ATCC 33406 / DSM 1761 / CIP 103989 / NBRC 15051 / NCIMB 9469 / D465).